The following is a 406-amino-acid chain: Tryptophan synthase beta chain (406 aa).

The residue at position 99 (Lys99) is an N6-(pyridoxal phosphate)lysine.

The protein belongs to the TrpB family. Tetramer of two alpha and two beta chains. Pyridoxal 5'-phosphate is required as a cofactor.

The catalysed reaction is (1S,2R)-1-C-(indol-3-yl)glycerol 3-phosphate + L-serine = D-glyceraldehyde 3-phosphate + L-tryptophan + H2O. It functions in the pathway amino-acid biosynthesis; L-tryptophan biosynthesis; L-tryptophan from chorismate: step 5/5. Functionally, the beta subunit is responsible for the synthesis of L-tryptophan from indole and L-serine. Essential for production of nod factors and establishment of symbiosis. This chain is Tryptophan synthase beta chain, found in Rhizobium etli (strain ATCC 51251 / DSM 11541 / JCM 21823 / NBRC 15573 / CFN 42).